A 161-amino-acid polypeptide reads, in one-letter code: Large ribosomal subunit protein uL16 (161 aa).

Belongs to the universal ribosomal protein uL16 family.

The sequence is that of Large ribosomal subunit protein uL16 from Methanosphaera stadtmanae (strain ATCC 43021 / DSM 3091 / JCM 11832 / MCB-3).